Consider the following 222-residue polypeptide: Histidinol-phosphatase (222 aa).

Asp8 (nucleophile) is an active-site residue. Positions 8, 10, and 184 each coordinate Mg(2+). The active-site Proton donor is the Asp10.

Belongs to the HAD-like hydrolase superfamily. SerB family. Mg(2+) serves as cofactor.

The catalysed reaction is L-histidinol phosphate + H2O = L-histidinol + phosphate. It functions in the pathway amino-acid biosynthesis; L-histidine biosynthesis; L-histidine from 5-phospho-alpha-D-ribose 1-diphosphate: step 8/9. Catalyzes the dephosphorylation of histidinol-phosphate to histidinol, the direct precursor of histidine. This chain is Histidinol-phosphatase, found in Neisseria meningitidis serogroup C (strain 8013).